Consider the following 431-residue polypeptide: Enolase (431 aa).

Residue glutamine 167 coordinates (2R)-2-phosphoglycerate. Glutamate 209 (proton donor) is an active-site residue. Mg(2+) contacts are provided by aspartate 246, glutamate 289, and aspartate 316. Lysine 341, arginine 370, serine 371, and lysine 392 together coordinate (2R)-2-phosphoglycerate. Lysine 341 functions as the Proton acceptor in the catalytic mechanism.

This sequence belongs to the enolase family. In terms of assembly, component of the RNA degradosome, a multiprotein complex involved in RNA processing and mRNA degradation. Mg(2+) serves as cofactor.

The protein resides in the cytoplasm. The protein localises to the secreted. It localises to the cell surface. The enzyme catalyses (2R)-2-phosphoglycerate = phosphoenolpyruvate + H2O. It participates in carbohydrate degradation; glycolysis; pyruvate from D-glyceraldehyde 3-phosphate: step 4/5. Its function is as follows. Catalyzes the reversible conversion of 2-phosphoglycerate (2-PG) into phosphoenolpyruvate (PEP). It is essential for the degradation of carbohydrates via glycolysis. The polypeptide is Enolase (Shewanella baltica (strain OS155 / ATCC BAA-1091)).